Reading from the N-terminus, the 372-residue chain is MISENGYMDLMRNCIKWNSRQMEDRKKRLRFPYYEHQTATAQRESRFTTRNVDHMYPSNDPNTVVQFATERWKKSKSQPPSDAVEMSMFLRENPSIQVAIDHLTPQVVGPTTESVSDSSNDSTTIRPSRQTQIKEEYRDDYVLDDELSPDEFGSDEDDWSSRKRRKGNLGPVQKATSSRKKVPTTRSSVSRLTPSRSIVKETKYEEPEEKTYPCDKCSAKYKSLAGLSYHQSYLHDQKSSQPLVKLLSPSIEISTSCDFCSGTAFMNKNTKLPEDLVSCHDCGRSGHPSCLNFNQNVTKIIKRSGWQCLECKSCTICGTSENDDKLLFCDDCDRGYHLYCLTPALEKAPDDEYSCRLCQVEFGDKASAPAKK.

The segment at 108-204 (VGPTTESVSD…SRSIVKETKY (97 aa)) is disordered. Residues 109-131 (GPTTESVSDSSNDSTTIRPSRQT) show a composition bias toward polar residues. Over residues 132–141 (QIKEEYRDDY) the composition is skewed to basic and acidic residues. Residues 142–158 (VLDDELSPDEFGSDEDD) show a composition bias toward acidic residues. Positions 184 to 196 (TTRSSVSRLTPSR) are enriched in polar residues. The C2H2-type zinc-finger motif lies at 212-235 (YPCDKCSAKYKSLAGLSYHQSYLH). PHD-type zinc fingers lie at residues 256 to 314 (SCDF…CKSC) and 316 to 361 (ICGT…CQVE).

This sequence belongs to the requiem/DPF family.

It is found in the nucleus. The protein localises to the cytoplasm. Its function is as follows. Probable transcription factor, involved in meiosis and stress protection. This is Zinc finger protein dpff-1 from Caenorhabditis elegans.